Here is a 596-residue protein sequence, read N- to C-terminus: Phosphoenolpyruvate carboxykinase [GTP] (596 aa).

Substrate contacts are provided by residues Arg-77 and 205–207 (YGG). Residues Lys-214 and His-234 each contribute to the Mn(2+) site. Residue Ser-256 participates in substrate binding. 257–262 (ACGKTN) contacts GTP. The active site involves Cys-258. Asp-283 contacts Mn(2+). A disordered region spans residues 362–388 (KKGSTEKAAHPNSRFTAPAKNNPAISP). 373–375 (NSR) contacts substrate. GTP contacts are provided by residues Arg-375, Arg-406, and 499 to 502 (YGDN).

This sequence belongs to the phosphoenolpyruvate carboxykinase [GTP] family. In terms of assembly, monomer. Requires Mn(2+) as cofactor.

It localises to the cytoplasm. The catalysed reaction is oxaloacetate + GTP = phosphoenolpyruvate + GDP + CO2. Its pathway is carbohydrate biosynthesis; gluconeogenesis. Functionally, catalyzes the conversion of oxaloacetate (OAA) to phosphoenolpyruvate (PEP), the rate-limiting step in the metabolic pathway that produces glucose from lactate and other precursors derived from the citric acid cycle. This chain is Phosphoenolpyruvate carboxykinase [GTP], found in Anaeromyxobacter sp. (strain K).